The following is a 166-amino-acid chain: Cyclin-dependent kinase 4 inhibitor D (166 aa).

Met-1 carries the post-translational modification N-acetylmethionine. ANK repeat units follow at residues 41–69 (FGKT…SPNV), 73–102 (SGTS…DVNA), 106–135 (TGSL…LHHR), and 138–165 (SGLT…MMIP).

Belongs to the CDKN2 cyclin-dependent kinase inhibitor family. In terms of assembly, interacts with CDK6.

It localises to the nucleus. Its subcellular location is the cytoplasm. Its function is as follows. Interacts strongly with CDK4 and CDK6 and inhibits them. The protein is Cyclin-dependent kinase 4 inhibitor D (Cdkn2d) of Mus musculus (Mouse).